Consider the following 78-residue polypeptide: Large ribosomal subunit protein bL28 (78 aa).

Belongs to the bacterial ribosomal protein bL28 family.

The polypeptide is Large ribosomal subunit protein bL28 (Trichormus variabilis (strain ATCC 29413 / PCC 7937) (Anabaena variabilis)).